Consider the following 73-residue polypeptide: Frenatin 3.1 (73 aa).

Residues 1–22 (MHFLKKSIFLVLFLGLVSLSIC) form the signal peptide. The propeptide occupies 23 to 46 (EKEKREDQNEEEVDENEEASEEKR). The interval 25-45 (EKREDQNEEEVDENEEASEEK) is disordered. The span at 30–42 (QNEEEVDENEEAS) shows a compositional bias: acidic residues.

In terms of tissue distribution, expressed by the skin glands.

The protein localises to the secreted. Its function is as follows. Antimicrobial peptide with activity against both Gram-positive and Gram-negative bacteria. This Nyctimystes infrafrenatus (White-lipped tree frog) protein is Frenatin 3.1.